A 207-amino-acid chain; its full sequence is Outer-membrane lipoprotein LolB (207 aa).

The first 21 residues, 1 to 21 (MPIRKVSLLRLIPLASLVLAA), serve as a signal peptide directing secretion. Cys-22 carries the N-palmitoyl cysteine lipid modification. Cys-22 carries the S-diacylglycerol cysteine lipid modification.

The protein belongs to the LolB family. In terms of assembly, monomer.

The protein resides in the cell outer membrane. In terms of biological role, plays a critical role in the incorporation of lipoproteins in the outer membrane after they are released by the LolA protein. The sequence is that of Outer-membrane lipoprotein LolB from Serratia proteamaculans (strain 568).